The sequence spans 305 residues: Undecaprenyl-diphosphatase (305 aa).

A run of 8 helical transmembrane segments spans residues 18 to 38 (GVTE…PALV), 55 to 75 (YLAF…VFFW), 103 to 123 (WLIV…EQLF), 130 to 150 (PVPA…GEVL), 187 to 207 (GVLI…RSGI), 225 to 245 (FSFL…IPEL), 246 to 266 (FGPL…ASFV), and 284 to 304 (LTPF…WLAL).

This sequence belongs to the UppP family.

It localises to the cell membrane. The catalysed reaction is di-trans,octa-cis-undecaprenyl diphosphate + H2O = di-trans,octa-cis-undecaprenyl phosphate + phosphate + H(+). Its function is as follows. Catalyzes the dephosphorylation of undecaprenyl diphosphate (UPP). Confers resistance to bacitracin. The protein is Undecaprenyl-diphosphatase of Mycolicibacterium paratuberculosis (strain ATCC BAA-968 / K-10) (Mycobacterium paratuberculosis).